We begin with the raw amino-acid sequence, 485 residues long: uncharacterized protein (485 aa).

13 helical membrane passes run 13-33 (WSAL…VILS), 38-58 (PFEF…DMLA), 79-99 (ALYW…IILS), 111-131 (LSFL…GQQY), 160-180 (VIIG…LLTV), 211-231 (LLFS…SSIT), 234-254 (IVAR…FNVA), 297-317 (INFP…YLVF), 321-341 (WLFI…RMVA), 365-385 (IIIF…VGAA), 388-408 (FLIC…KPVL), 420-440 (FIPF…DIYI), and 445-465 (LTFF…TIFI).

This sequence belongs to the polysaccharide synthase family.

It is found in the cell membrane. This is an uncharacterized protein from Klebsiella pneumoniae.